The primary structure comprises 260 residues: Alpha carbonic anhydrase 6 (260 aa).

The signal sequence occupies residues 1-28 (MDANTKTILFFVVFFIDLFSPNILFVYA). Residues 35-260 (PLFTYKQKTE…FVFVFWCMLM (226 aa)) enclose the Alpha-carbonic anhydrase domain. C60 and C215 are oxidised to a cystine. The active-site Proton acceptor is H100. Zn(2+)-binding residues include H126 and H128. N136 carries an N-linked (GlcNAc...) asparagine glycan. Zn(2+) is bound at residue H145. Residue 211–212 (TI) coordinates substrate.

The protein belongs to the alpha-class carbonic anhydrase family. Zn(2+) is required as a cofactor. Post-translationally, N-glycosylated.

It localises to the plastid. The protein resides in the chloroplast stroma. It carries out the reaction hydrogencarbonate + H(+) = CO2 + H2O. Functionally, reversible hydration of carbon dioxide. The sequence is that of Alpha carbonic anhydrase 6 (ACA6) from Arabidopsis thaliana (Mouse-ear cress).